The following is a 74-amino-acid chain: U19-theraphotoxin-Cg1a (74 aa).

An N-terminal signal peptide occupies residues Ile-1–Ser-7. Residues Ala-8–Gln-36 constitute a propeptide that is removed on maturation. Disulfide bonds link Cys-39–Cys-53, Cys-46–Cys-58, and Cys-52–Cys-66.

The protein belongs to the neurotoxin 10 (Hwtx-1) family. 38 (Jztx-33) subfamily. Expressed by the venom gland.

It localises to the secreted. Functionally, probable ion channel inhibitor. The chain is U19-theraphotoxin-Cg1a from Chilobrachys guangxiensis (Chinese earth tiger tarantula).